Here is a 224-residue protein sequence, read N- to C-terminus: tRNA (guanine-N(7)-)-methyltransferase (224 aa).

Residues glutamate 54, glutamate 79, glutamate 106, and aspartate 129 each coordinate S-adenosyl-L-methionine. Aspartate 129 is a catalytic residue. 2 residues coordinate substrate: lysine 133 and aspartate 165.

The protein belongs to the class I-like SAM-binding methyltransferase superfamily. TrmB family.

It carries out the reaction guanosine(46) in tRNA + S-adenosyl-L-methionine = N(7)-methylguanosine(46) in tRNA + S-adenosyl-L-homocysteine. The protein operates within tRNA modification; N(7)-methylguanine-tRNA biosynthesis. In terms of biological role, catalyzes the formation of N(7)-methylguanine at position 46 (m7G46) in tRNA. This is tRNA (guanine-N(7)-)-methyltransferase from Chlamydia abortus (strain DSM 27085 / S26/3) (Chlamydophila abortus).